The primary structure comprises 156 residues: Extracellular giant hemoglobin major globin subunit A1 (156 aa).

Residues 1-16 form the signal peptide; that stretch reads MKVLIIFACLVVMASA. In terms of domain architecture, Globin spans 17–156; the sequence is VCNRLEQILV…YERIASGISG (140 aa). A disulfide bond links cysteine 18 and cysteine 146. Residue cysteine 79 participates in hydrogen sulfide binding. Histidine 110 is a binding site for heme b.

It belongs to the globin family. In terms of assembly, the 400 kDa hemoglobin consists of a spherical 24-mer arranged as a double layer of dome-shaped dodecamers. Each dodecamer is composed of the 3-fold trimer of the tetramer A1-A2-B1-B2 having one intra-tetramer (A1-B2) disulfide bond and one inter-tetramer (B1-B2) disulfide bond per tetramer.

Its subcellular location is the secreted. In terms of biological role, the extracellular giant hemoglobin is able to bind and transport oxygen and hydrosulfide simultaneously and reversibly at two different sites. In Oligobrachia mashikoi (Beard worm), this protein is Extracellular giant hemoglobin major globin subunit A1 (ghbA1).